A 291-amino-acid chain; its full sequence is uncharacterized protein (291 aa).

This sequence belongs to the pseudouridine synthase RluA family.

It catalyses the reaction a uridine in RNA = a pseudouridine in RNA. This is an uncharacterized protein from Synechocystis sp. (strain ATCC 27184 / PCC 6803 / Kazusa).